Here is a 63-residue protein sequence, read N- to C-terminus: Cecropin-2 (63 aa).

An N-terminal signal peptide occupies residues 1–23 (MNFYKVFIFVALILAISLGQSEA). At Arg62 the chain carries Arginine amide.

Belongs to the cecropin family.

The protein localises to the secreted. Its function is as follows. Cecropins have lytic and antibacterial activity against several Gram-positive and Gram-negative bacteria. The protein is Cecropin-2 (Cec2A) of Drosophila virilis (Fruit fly).